Here is a 670-residue protein sequence, read N- to C-terminus: DNA ligase (670 aa).

NAD(+) contacts are provided by residues 32–36, 81–82, and E114; these read DSEYD and SL. Catalysis depends on K116, which acts as the N6-AMP-lysine intermediate. The NAD(+) site is built by R137, E174, K291, and K315. Residues C409, C412, C427, and C433 each contribute to the Zn(2+) site. The 79-residue stretch at 592–670 folds into the BRCT domain; the sequence is ASENLFKDKT…EEEFLAQITR (79 aa).

This sequence belongs to the NAD-dependent DNA ligase family. LigA subfamily. Requires Mg(2+) as cofactor. The cofactor is Mn(2+).

The enzyme catalyses NAD(+) + (deoxyribonucleotide)n-3'-hydroxyl + 5'-phospho-(deoxyribonucleotide)m = (deoxyribonucleotide)n+m + AMP + beta-nicotinamide D-nucleotide.. In terms of biological role, DNA ligase that catalyzes the formation of phosphodiester linkages between 5'-phosphoryl and 3'-hydroxyl groups in double-stranded DNA using NAD as a coenzyme and as the energy source for the reaction. It is essential for DNA replication and repair of damaged DNA. The chain is DNA ligase from Haemophilus influenzae (strain PittEE).